A 248-amino-acid chain; its full sequence is UPF0736 protein ABC2536 (248 aa).

It belongs to the UPF0736 family.

The chain is UPF0736 protein ABC2536 from Shouchella clausii (strain KSM-K16) (Alkalihalobacillus clausii).